We begin with the raw amino-acid sequence, 375 residues long: Chaperone protein DnaJ (375 aa).

One can recognise a J domain in the interval 5–70 (DFYEVLGVER…SKRAAYDQYG (66 aa)). Residues 134-212 (GTTVSIRVPT…CHGEGRVEEY (79 aa)) form a CR-type zinc finger. The Zn(2+) site is built by cysteine 147, cysteine 150, cysteine 164, cysteine 167, cysteine 186, cysteine 189, cysteine 200, and cysteine 203. CXXCXGXG motif repeat units lie at residues 147–154 (CKPCDGSG), 164–171 (CPTCGGIG), 186–193 (CPRCHGQG), and 200–207 (CNSCHGEG).

It belongs to the DnaJ family. In terms of assembly, homodimer. The cofactor is Zn(2+).

The protein resides in the cytoplasm. In terms of biological role, participates actively in the response to hyperosmotic and heat shock by preventing the aggregation of stress-denatured proteins and by disaggregating proteins, also in an autonomous, DnaK-independent fashion. Unfolded proteins bind initially to DnaJ; upon interaction with the DnaJ-bound protein, DnaK hydrolyzes its bound ATP, resulting in the formation of a stable complex. GrpE releases ADP from DnaK; ATP binding to DnaK triggers the release of the substrate protein, thus completing the reaction cycle. Several rounds of ATP-dependent interactions between DnaJ, DnaK and GrpE are required for fully efficient folding. Also involved, together with DnaK and GrpE, in the DNA replication of plasmids through activation of initiation proteins. In Pseudomonas entomophila (strain L48), this protein is Chaperone protein DnaJ.